Here is a 241-residue protein sequence, read N- to C-terminus: Uracil-DNA glycosylase (241 aa).

Asp71 (proton acceptor) is an active-site residue.

It belongs to the uracil-DNA glycosylase (UDG) superfamily. UNG family.

It is found in the cytoplasm. The enzyme catalyses Hydrolyzes single-stranded DNA or mismatched double-stranded DNA and polynucleotides, releasing free uracil.. Excises uracil residues from the DNA which can arise as a result of misincorporation of dUMP residues by DNA polymerase or due to deamination of cytosine. The sequence is that of Uracil-DNA glycosylase from Xanthomonas axonopodis pv. citri (strain 306).